A 40-amino-acid polypeptide reads, in one-letter code: Large ribosomal subunit protein bL36B (40 aa).

Belongs to the bacterial ribosomal protein bL36 family.

The protein is Large ribosomal subunit protein bL36B of Kocuria rhizophila (strain ATCC 9341 / DSM 348 / NBRC 103217 / DC2201).